The following is a 481-amino-acid chain: ADAMTS-like protein 5 (481 aa).

Residues 1–42 form the signal peptide; the sequence is MGKLRPGRVEWLASGHTERPHLFQNLLLFLWALLNCGLGVSA. The TSP type-1 domain maps to 45 to 97; the sequence is PGEWTPWVSWTRCSSSCGRGVSVRSRRCLRLPGEEPCWGDSHEYRLCQLPDCP. 3 disulfide bridges follow: Cys57/Cys91, Cys61/Cys96, and Cys72/Cys81. Asn218 is a glycosylation site (N-linked (GlcNAc...) asparagine). The disordered stretch occupies residues 331–361; sequence QPQPRGVEPQPPAAPAVTPAQTPTLAPDPCP. The span at 345–355 shows a compositional bias: low complexity; sequence PAVTPAQTPTL. Intrachain disulfides connect Cys360-Cys425, Cys363-Cys427, and Cys377-Cys479. Residues 360–479 enclose the NTR domain; the sequence is CPPCPDTRGR…SRIRLTARRC (120 aa).

As to quaternary structure, interacts with heparin, FBN1 and FBN2. In terms of processing, proteolytically cleaved to release a C-terminal fragment containing the NTR domain. Contains at least one additional N-linked glycosylation site.

Its subcellular location is the secreted. It is found in the extracellular space. The protein localises to the extracellular matrix. In terms of biological role, may play a role in modulation of fibrillin microfibrils in the extracellular matrix (ECM). This Homo sapiens (Human) protein is ADAMTS-like protein 5 (ADAMTSL5).